The following is a 63-amino-acid chain: Large ribosomal subunit protein uL30 (63 aa).

It belongs to the universal ribosomal protein uL30 family. Part of the 50S ribosomal subunit.

This chain is Large ribosomal subunit protein uL30, found in Rickettsia canadensis (strain McKiel).